A 447-amino-acid chain; its full sequence is Folate synthesis bifunctional protein (447 aa).

Positions methionine 1 to proline 165 are HPPK. In terms of domain architecture, Pterin-binding spans threonine 179–serine 438. Residues leucine 181 to valine 447 form a DHPS region. Asparagine 186 contributes to the Mg(2+) binding site. (7,8-dihydropterin-6-yl)methyl diphosphate-binding positions include threonine 226, aspartate 266, asparagine 286, aspartate 356, lysine 392, and arginine 426–histidine 428.

It in the C-terminal section; belongs to the DHPS family. In the N-terminal section; belongs to the HPPK family. Mg(2+) is required as a cofactor.

The catalysed reaction is 6-hydroxymethyl-7,8-dihydropterin + ATP = (7,8-dihydropterin-6-yl)methyl diphosphate + AMP + H(+). It catalyses the reaction (7,8-dihydropterin-6-yl)methyl diphosphate + 4-aminobenzoate = 7,8-dihydropteroate + diphosphate. It participates in cofactor biosynthesis; tetrahydrofolate biosynthesis; 2-amino-4-hydroxy-6-hydroxymethyl-7,8-dihydropteridine diphosphate from 7,8-dihydroneopterin triphosphate: step 4/4. It functions in the pathway cofactor biosynthesis; tetrahydrofolate biosynthesis; 7,8-dihydrofolate from 2-amino-4-hydroxy-6-hydroxymethyl-7,8-dihydropteridine diphosphate and 4-aminobenzoate: step 1/2. In Chlamydia caviae (strain ATCC VR-813 / DSM 19441 / 03DC25 / GPIC) (Chlamydophila caviae), this protein is Folate synthesis bifunctional protein (folKP).